The primary structure comprises 104 residues: Pterin-4-alpha-carbinolamine dehydratase (104 aa).

An N-acetylalanine modification is found at alanine 2. Substrate is bound by residues 61–63 (DHH) and 78–81 (STHE).

The protein belongs to the pterin-4-alpha-carbinolamine dehydratase family. In terms of assembly, homotetramer and homodimer. In terms of tissue distribution, the major tissues expressing cDcoH are hypothalamus, kidney and liver.

It is found in the cytoplasm. Its subcellular location is the nucleus. It catalyses the reaction (4aS,6R)-4a-hydroxy-L-erythro-5,6,7,8-tetrahydrobiopterin = (6R)-L-erythro-6,7-dihydrobiopterin + H2O. In terms of biological role, involved in tetrahydrobiopterin biosynthesis. Seems to both prevent the formation of 7-pterins and accelerate the formation of quinonoid-BH2. Coactivator for HNF1A-dependent transcription. Regulates the dimerization of homeodomain protein HNF1A and enhances its transcriptional activity. Also acts as a coactivator for HNF1B-dependent transcription. This Gallus gallus (Chicken) protein is Pterin-4-alpha-carbinolamine dehydratase (PCBD1).